A 265-amino-acid polypeptide reads, in one-letter code: Bradykinin-potentiating and C-type natriuretic peptides (265 aa).

An N-terminal signal peptide occupies residues 1-23 (MVLSRLAASGLLLLALLALSVDG). A propeptide spanning residues 24-30 (KPVQQWA) is cleaved from the precursor. Pyrrolidone carboxylic acid is present on glutamine 31. Positions 44-50 (LKVQQWA) are excised as a propeptide. Glutamine 51 carries the post-translational modification Pyrrolidone carboxylic acid. A propeptide spanning residues 64–70 (LTVQQWA) is cleaved from the precursor. Glutamine 71 carries the post-translational modification Pyrrolidone carboxylic acid. The propeptide occupies 81–87 (LTVQQWA). Pyrrolidone carboxylic acid is present on glutamine 88. The propeptide occupies 100–106 (LEVQQWA). A Pyrrolidone carboxylic acid modification is found at glutamine 107. Residues 118–120 (APL) constitute a propeptide that is removed on maturation. A Pyrrolidone carboxylic acid modification is found at glutamine 121. Valine 126 is a propeptide. Glutamine 127 is modified (pyrrolidone carboxylic acid). Residues 132–241 (LLQPHESPAS…GGARRLKGLA (110 aa)) constitute a propeptide that is removed on maturation. Residues 153–211 (GPEAASGVPSAGAEVGRSGSKAPAAPHRLSKSKGAAATSAASRPMRDLRPDGKQARQNW) are disordered. Positions 184 to 194 (SKGAAATSAAS) are enriched in low complexity. Over residues 196-206 (PMRDLRPDGKQ) the composition is skewed to basic and acidic residues. A disulfide bond links cysteine 249 and cysteine 265.

This sequence in the N-terminal section; belongs to the bradykinin-potentiating peptide family. The protein in the C-terminal section; belongs to the natriuretic peptide family. In terms of tissue distribution, expressed by the venom gland.

The protein localises to the secreted. It is found in the cytoplasm. The protein resides in the cytosol. Its function is as follows. Modestly inhibits ACE (with highest affinity for the N-site) and reveals strong bradykinin-potentiating activity. Induces nitric oxide (NO) production depended on muscarinic acetylcholine receptor M1 subtype (CHRM1) and bradykinin B2 receptor (BDKRB2) activation. Both these receptors contribute to the vasodilation induced by this peptide that may have an indirect action on BDKRB2 and a direct agonistic action on CHRM1. Functionally, peptide with several activities. It inhibits the activity of the angiotensin-converting enzyme (ACE) by a preferential interaction with its C-domain. It evokes transient hypotension (-14 mmHg) similar to that evoked by 0.5 ug of bradykinin, when injected alone into rats. It has a high bradykinin-potentiating effect (120%), when 60 nmol of BPP-10c are coinjected with 0.5 ug of bradykinin into rats. Does not affect angiotensin-1 pressor effects. Shows potent and long-lasting antihypertensive activity as well as a reduction of the heart rate. It also binds and dose-dependently promotes the activation of cytosolic argininosuccinate synthase (ASS1), an enzyme that catalyzes the conversion of citrulline, L-aspartate and ATP to argininosuccinate, AMP and pyrophosphate. It also enhances ASS1-dependent arginine production in HEK 293 cells, as well as in spontaneous hypertensive rat (SHR) and Wistar rat plasma. In addition, it induces the production of nitric-oxide (NO) by HUVEC cells via the endothelial nitric-oxide synthase (NOS3), which use arginine as a substrate and produce NO. It has been shown to be internalized by ASS1-expressing endothelial (HUVEC) and kidney (HEK 293) cells, and is detected homogenously distributed within the cell cytoplasm for up to 2 hours. Has a vasorelaxant activity in rat aortic strips and a diuretic potency in anesthetized rats. May act by activating natriuretic receptors (NPR1 and/or NPR2). The protein is Bradykinin-potentiating and C-type natriuretic peptides of Bothrops insularis (Golden lancehead).